Reading from the N-terminus, the 448-residue chain is Microtubule-associated protein tau (448 aa).

Basic and acidic residues predominate over residues 1 to 16 (MAEPRQEFDVMEDHAQ). The segment at 1–264 (MAEPRQEFDV…GPMPDLKNVK (264 aa)) is disordered. At alanine 2 the chain carries N-acetylalanine. The residue at position 19 (tyrosine 19) is a Phosphotyrosine. Lysine 33 participates in a covalent cross-link: Glycyl lysine isopeptide (Lys-Gly) (interchain with G-Cter in ubiquitin). Serine 35 and serine 50 each carry phosphoserine. Positions 50-60 (SETSDAKSTPT) are enriched in polar residues. Phosphothreonine is present on residues threonine 58 and threonine 60. Low complexity predominate over residues 71 to 89 (EGAPGEQAAAQAPAEIPEG). A Phosphothreonine modification is found at threonine 100. Positions 119-135 (KGKDGTGPDDKKTKGAD) are enriched in basic and acidic residues. Threonine 144 bears the Phosphothreonine mark. Arginine 146 bears the Omega-N-methylarginine mark. The residue at position 154 (lysine 154) is an N6,N6-dimethyllysine; alternate. Lysine 154 is subject to N6-acetyllysine; alternate. Phosphothreonine occurs at positions 160, 166, 167, and 172. Positions 163 to 176 (PAKTTPTPKTSPAT) are enriched in low complexity. The segment covering 189–200 (KSERGESGKSGD) has biased composition (basic and acidic residues). Residues serine 198 and serine 202 each carry the phosphoserine modification. A compositionally biased stretch (low complexity) spans 201-221 (RSGYSSPGSPGTPGSRSRTPS). The residue at position 204 (tyrosine 204) is a Phosphotyrosine. Phosphoserine is present on residues serine 205, serine 206, and serine 209. Residues threonine 212 and threonine 219 each carry the phosphothreonine modification. Serine 221 bears the Phosphoserine mark. Threonine 224 is modified (phosphothreonine). At lysine 232 the chain carries N6-acetyllysine. Threonine 238 carries the phosphothreonine modification. Residues serine 242 and serine 244 each carry the phosphoserine modification. Tau/MAP repeat units follow at residues 251–281 (QAAP…GGGK), 282–312 (VQII…GGGS), 313–343 (VQIV…GGGQ), and 344–375 (VEVK…GGGN). Lysine 261 participates in a covalent cross-link: Glycyl lysine isopeptide (Lys-Gly) (interchain with G-Cter in ubiquitin). Lysine 266 is subject to N6-acetyllysine; alternate. N6-methyllysine; alternate is present on lysine 266. Residue lysine 266 forms a Glycyl lysine isopeptide (Lys-Gly) (interchain with G-Cter in ubiquitin); alternate linkage. Serine 269 carries the phosphoserine modification. Lysine 274 is covalently cross-linked (Glycyl lysine isopeptide (Lys-Gly) (interchain with G-Cter in ubiquitin)). Lysine 288 is modified (N6-acetyllysine; alternate). Lysine 288 participates in a covalent cross-link: Glycyl lysine isopeptide (Lys-Gly) (interchain with G-Cter in ubiquitin); alternate. Serine 292 and serine 296 each carry phosphoserine. Lysine 297 is modified (N6-acetyllysine). An intrachain disulfide couples cysteine 298 to cysteine 329. Serine 300 carries the phosphoserine modification. Lysine 305 is subject to N6-acetyllysine; alternate. Lysine 305 participates in a covalent cross-link: Glycyl lysine isopeptide (Lys-Gly) (interchain with G-Cter in ubiquitin); alternate. A Phosphoserine modification is found at serine 312. An N6,N6-dimethyllysine; alternate modification is found at lysine 318. N6-acetyllysine; alternate occurs at positions 318, 324, and 328. Residues lysine 318, lysine 324, and lysine 328 each participate in a glycyl lysine isopeptide (Lys-Gly) (interchain with G-Cter in ubiquitin); alternate cross-link. Serine 331 carries the phosphoserine modification. An N6-acetyllysine; alternate mark is found at lysine 338, lysine 350, and lysine 354. Residues lysine 338, lysine 350, and lysine 354 each participate in a glycyl lysine isopeptide (Lys-Gly) (interchain with G-Cter in ubiquitin); alternate cross-link. Arginine 356 bears the Omega-N-methylarginine mark. Serine 359 is modified (phosphoserine). A Glycyl lysine isopeptide (Lys-Gly) (interchain with G-Cter in ubiquitin) cross-link involves residue lysine 360. A Phosphoserine modification is found at serine 363. An N6-acetyllysine; alternate modification is found at lysine 376. Lysine 376 is covalently cross-linked (Glycyl lysine isopeptide (Lys-Gly) (interchain with G-Cter in ubiquitin); alternate). A Glycyl lysine isopeptide (Lys-Gly) (interchain with G-Cter in ubiquitin) cross-link involves residue lysine 382. An N6-acetyllysine; alternate modification is found at lysine 392. Lysine 392 is covalently cross-linked (Glycyl lysine isopeptide (Lys-Gly) (interchain with G-Cter in ubiquitin); alternate). Phosphotyrosine is present on tyrosine 401. Phosphoserine is present on residues serine 403 and serine 407. The interval 405–424 (VVSGDTSPRHLSNVSSTGSI) is disordered. The segment covering 408–423 (GDTSPRHLSNVSSTGS) has biased composition (polar residues). Threonine 410 carries the post-translational modification Phosphothreonine. Serine 411, serine 416, serine 423, and serine 429 each carry phosphoserine. At threonine 434 the chain carries Phosphothreonine.

As to quaternary structure, interacts with MARK1, MARK2, MARK3 and MARK4. Interacts with SQSTM1 when polyubiquitinated. Interacts with PSMC2 through SQSTM1. Interacts with FKBP4. Binds to CSNK1D. Interacts with SGK1. Interacts with PIN1. Interacts with LRRK2. Interacts with LRP1, leading to endocytosis; this interaction is reduced in the presence of LRPAP1/RAP. Post-translationally, polyubiquitinated. Requires functional TRAF6 and may provoke SQSTM1-dependent degradation by the proteasome. In terms of processing, phosphorylation at various serine and threonine residues in S-P or T-P motifs by proline-directed protein kinases (PDPK1, CDK1, CDK5, GSK3, MAPK) (a few sites per protein in interphase, more in mitosis), and at serine residues in K-X-G-S motifs by MAP/microtubule affinity-regulating kinase (MARK1, MARK2, MARK3, MARK4), causing detachment from microtubules, and their disassembly. Phosphorylation at Ser-269 by BRSK1 and BRSK2 in neurons affects ability to bind microtubules and plays a role in neuron polarization. Phosphorylated by PHK. Dephosphorylation at several serine and threonine residues by the serine/threonine phosphatase PPP5C. O-glycosylated; contains at least 4 GlcNAc. Site-specific or stoichiometric changes in glycosylation may modulate tau function and also play a role in PHF's formation. Expressed in neurons.

The protein localises to the cytoplasm. The protein resides in the cytosol. Its subcellular location is the cell membrane. It localises to the cytoskeleton. It is found in the cell projection. The protein localises to the axon. The protein resides in the dendrite. Its subcellular location is the secreted. Its function is as follows. Promotes microtubule assembly and stability, and might be involved in the establishment and maintenance of neuronal polarity. The C-terminus binds axonal microtubules while the N-terminus binds neural plasma membrane components, suggesting that tau functions as a linker protein between both. Axonal polarity is predetermined by tau localization (in the neuronal cell) in the domain of the cell body defined by the centrosome. The short isoforms allow plasticity of the cytoskeleton whereas the longer isoforms may preferentially play a role in its stabilization. The polypeptide is Microtubule-associated protein tau (MAPT) (Bos taurus (Bovine)).